The sequence spans 284 residues: MKDLNKTIGVFVRPTHHQNALFKELEQAKEWVLTLLEDEGFESFMIDSLDGAKDAQLIKKAYAFLCLGGDGTILGALRMTHAHNKPCFGVRIGNLGFLSAVELNGLKDFLQDLKQNRIKLEEHLALEGRIGNTSFYAINEIVIAKKKALGVLDIKACAGHTPFNTYKGDGLIIATPLGSTAYNLSAHGPIVHALSQSYILTPLCDFSLTQRPLVLGAEFCLSFCAHEDALVVIDGQATYDLKANQPLYIQKSPTTTKLLQKNSRDYFKVLKEKLLWGESPNKKR.

Asp-70 serves as the catalytic Proton acceptor. NAD(+) is bound by residues Asp-70–Gly-71, Asn-139–Glu-140, Lys-167, Asp-169, Leu-177, Thr-180–Ser-185, and Gln-236.

This sequence belongs to the NAD kinase family. A divalent metal cation is required as a cofactor.

It localises to the cytoplasm. The catalysed reaction is NAD(+) + ATP = ADP + NADP(+) + H(+). Involved in the regulation of the intracellular balance of NAD and NADP, and is a key enzyme in the biosynthesis of NADP. Catalyzes specifically the phosphorylation on 2'-hydroxyl of the adenosine moiety of NAD to yield NADP. In Helicobacter pylori (strain J99 / ATCC 700824) (Campylobacter pylori J99), this protein is NAD kinase.